We begin with the raw amino-acid sequence, 139 residues long: Transcription antitermination protein NusB (139 aa).

Belongs to the NusB family.

Functionally, involved in transcription antitermination. Required for transcription of ribosomal RNA (rRNA) genes. Binds specifically to the boxA antiterminator sequence of the ribosomal RNA (rrn) operons. This is Transcription antitermination protein NusB from Salmonella agona (strain SL483).